A 248-amino-acid polypeptide reads, in one-letter code: Tetrachloro-P-hydroquinone reductive dehalogenase (248 aa).

The GST N-terminal domain occupies 2 to 84 (PEVSLYNYTM…EAAKLGKVGI (83 aa)). Positions 133 to 248 (YAEKYPELRS…RVMPNWKGGI (116 aa)) constitute a GST C-terminal domain.

It belongs to the GST superfamily. Homodimer.

It carries out the reaction 2,6-dichlorohydroquinone + glutathione disulfide + chloride + H(+) = 2,3,6-trichlorohydroquinone + 2 glutathione. The catalysed reaction is 2,3,6-trichlorohydroquinone + glutathione disulfide + chloride = 2,3,5,6-tetrachlorohydroquinone + 2 glutathione. It participates in xenobiotic degradation; pentachlorophenol degradation. Functionally, sequential reduction of tetrachloro-p-hydroquinone to monochlorophenol, using glutathione as the reducing agent. In Sphingobium chlorophenolicum, this protein is Tetrachloro-P-hydroquinone reductive dehalogenase (pcpC).